The primary structure comprises 65 residues: Large ribosomal subunit protein uL29 (65 aa).

This sequence belongs to the universal ribosomal protein uL29 family.

The polypeptide is Large ribosomal subunit protein uL29 (Brevibacillus brevis (strain 47 / JCM 6285 / NBRC 100599)).